The sequence spans 216 residues: UPF0502 protein VPA1223 (216 aa).

It belongs to the UPF0502 family.

The protein is UPF0502 protein VPA1223 of Vibrio parahaemolyticus serotype O3:K6 (strain RIMD 2210633).